Consider the following 340-residue polypeptide: Alcohol dehydrogenase (340 aa).

Positions 40 and 63 each coordinate Zn(2+).

Belongs to the zinc-containing alcohol dehydrogenase family. Zn(2+) is required as a cofactor.

The catalysed reaction is a primary alcohol + NAD(+) = an aldehyde + NADH + H(+). It carries out the reaction a secondary alcohol + NAD(+) = a ketone + NADH + H(+). The protein is Alcohol dehydrogenase (adhA) of Rhizobium meliloti (strain 1021) (Ensifer meliloti).